The following is a 107-amino-acid chain: Replication initiation control protein YabA (107 aa).

The Zn(2+) site is built by His80, Cys82, Cys97, and Cys100.

This sequence belongs to the YabA family. As to quaternary structure, homotetramer. Interacts with both DnaA and DnaN, acting as a bridge between these two proteins. Requires Zn(2+) as cofactor.

The protein resides in the cytoplasm. Its subcellular location is the nucleoid. Its function is as follows. Involved in control of chromosome replication initiation. Inhibits the cooperative binding of DnaA to the oriC region, thus negatively regulating initiation of chromosome replication. Inhibits the ability of DnaA-ATP to form a helix on DNA; does not disassemble preformed DnaA-DNA helices. Decreases the residence time of DnaA on the chromosome at its binding sites (oriC, replication forks and promoter-binding sites). Tethers DnaA to the replication machinery via the DNA polymerase beta sliding clamp subunit (dnaN). Associates with oriC and other DnaA targets on the chromosome in a DnaA-dependent manner. In Streptococcus gordonii (strain Challis / ATCC 35105 / BCRC 15272 / CH1 / DL1 / V288), this protein is Replication initiation control protein YabA.